The following is a 251-amino-acid chain: MLQTMKTLTLIPTRLGSTRLPNKPLADICGKPMIVHVADRAAAAKLGRTVIATDSEEIFKVVAAHGHEAIMTRGDHESGSDRIYEALAKLDPSGEIDAVVNVQGDLPTIDPDTIRRALLPLEDGPADIATLGVEITVEEEKTNPNVVKIVGSPLAGNRRLRALYFTRATAPYGEGPLYHHIGLYAYRRSALERFVKLGPSPLEKREKLEQLRALEAGMRIDVEIVKTVPLGVDTQADLDRARTFCSQAGTI.

The protein belongs to the KdsB family.

It is found in the cytoplasm. It catalyses the reaction 3-deoxy-alpha-D-manno-oct-2-ulosonate + CTP = CMP-3-deoxy-beta-D-manno-octulosonate + diphosphate. It functions in the pathway nucleotide-sugar biosynthesis; CMP-3-deoxy-D-manno-octulosonate biosynthesis; CMP-3-deoxy-D-manno-octulosonate from 3-deoxy-D-manno-octulosonate and CTP: step 1/1. Its pathway is bacterial outer membrane biogenesis; lipopolysaccharide biosynthesis. Its function is as follows. Activates KDO (a required 8-carbon sugar) for incorporation into bacterial lipopolysaccharide in Gram-negative bacteria. The protein is 3-deoxy-manno-octulosonate cytidylyltransferase of Brucella canis (strain ATCC 23365 / NCTC 10854 / RM-666).